Here is a 286-residue protein sequence, read N- to C-terminus: Large ribosomal subunit protein uL4m (286 aa).

Residues 1–26 (MTIKRNLVKTLQSIRYQATTATAHAE) constitute a mitochondrion transit peptide. The interval 85 to 132 (RRVGASNPPGRSENGFSRRKLMPQKGSGRARVGDANSPTRHNGGRALA) is disordered.

It belongs to the universal ribosomal protein uL4 family. As to quaternary structure, component of the mitochondrial large ribosomal subunit (mt-LSU). Mature yeast 74S mitochondrial ribosomes consist of a small (37S) and a large (54S) subunit. The 37S small subunit contains a 15S ribosomal RNA (15S mt-rRNA) and 34 different proteins. The 54S large subunit contains a 21S rRNA (21S mt-rRNA) and 46 different proteins.

The protein resides in the mitochondrion. Its function is as follows. Component of the mitochondrial ribosome (mitoribosome), a dedicated translation machinery responsible for the synthesis of mitochondrial genome-encoded proteins, including at least some of the essential transmembrane subunits of the mitochondrial respiratory chain. The mitoribosomes are attached to the mitochondrial inner membrane and translation products are cotranslationally integrated into the membrane. This Saccharomyces cerevisiae (strain ATCC 204508 / S288c) (Baker's yeast) protein is Large ribosomal subunit protein uL4m (YML6).